Here is a 463-residue protein sequence, read N- to C-terminus: MIPQLNRNYAWAIALGLVARSSLVSAGPCDIYASGGTPCVAAHGTTRALHDSYTGPLYQVKRGSDGATTDIAPRHAGGVANATHQDTFCAGTTCLITIIYDQSGHGNHLSQAPPGHFIGPDSQGYDNLASAIGAPVTLNGQKAYGVFISPGTGYRNNAAKNTATGDEAEGLYAVLDGTHYNNGCCFDYGNAEVSGDDTGNGHMEAIYFGDLTAYGTGSGSGPWIMADLENGLFSGFNAKNNAEDPSLSYRFISAAVKGGPNKWAIRGGNAASGPLSTFYNGSRPNARGYNPMSKEGAIILGIGGHNSKLTVGSSISLRATTLCCTTRYVAHNGSTVNTQVVSSSSSAALKQQASWRVRTGLANSECFSFESVDTPNSFLMHNNFVLLLKSNDGTKALHEAATFCPQLGLNGKGNSIRSWSYPTRYFRHYDNVLYAASNGGVHKFDNPASFNDDVSWVVSASFA.

An N-terminal signal peptide occupies residues 1–26 (MIPQLNRNYAWAIALGLVARSSLVSA). The interval 27 to 308 (GPCDIYASGG…ILGIGGHNSK (282 aa)) is catalytic. Cysteine 29 and cysteine 39 are disulfide-bonded. Asparagine 81 carries an N-linked (GlcNAc...) asparagine glycan. 2 disulfide bridges follow: cysteine 89-cysteine 94 and cysteine 184-cysteine 185. Position 227 (aspartate 227) interacts with substrate. The active-site Nucleophile is the glutamate 229. Substrate is bound at residue asparagine 230. Residue asparagine 280 is glycosylated (N-linked (GlcNAc...) asparagine). Glycine 304 provides a ligand contact to substrate. The tract at residues 309 to 463 (LTVGSSISLR…VSWVVSASFA (155 aa)) is ABD. An N-linked (GlcNAc...) asparagine glycan is attached at asparagine 332. A disulfide bridge links cysteine 366 with cysteine 404. Substrate is bound by residues histidine 381, asparagine 383, phenylalanine 384, histidine 428, aspartate 430, leucine 433, and aspartate 453.

Belongs to the glycosyl hydrolase 54 family. Residue Asn-280 is mannosylated with up to 7 mannose residues.

Its subcellular location is the secreted. The enzyme catalyses Hydrolysis of terminal non-reducing alpha-L-arabinofuranoside residues in alpha-L-arabinosides.. Its pathway is glycan metabolism; L-arabinan degradation. Secreted alpha-L-arabinofuranosidase that actively hydrolyzes p-NP-alpha-L-arabinofuranoside and is specific for furanose configuration of the carbohydrate ring. Also exhibits significant activity against polymeric arabinose-containing substrates such as arabinan and arabinoxylan, a major component of plant hemicellulose. The polypeptide is Alpha-L-arabinofuranosidase B (abfB) (Penicillium canescens).